A 379-amino-acid polypeptide reads, in one-letter code: Wnt inhibitory factor 1 (379 aa).

The first 28 residues, 1–28, serve as a signal peptide directing secretion; the sequence is MARRSAFPAAALWLWSILLCLLALRAEA. The WIF domain maps to 38-177; that stretch reads LWIDAHQARV…PQNAIFFKTC (140 aa). Residue asparagine 88 is glycosylated (N-linked (GlcNAc...) asparagine). 7 cysteine pairs are disulfide-bonded: cysteine 140/cysteine 177, cysteine 182/cysteine 192, cysteine 186/cysteine 198, cysteine 200/cysteine 209, cysteine 214/cysteine 224, cysteine 218/cysteine 230, and cysteine 232/cysteine 241. 5 consecutive EGF-like domains span residues 178 to 210, 211 to 242, 243 to 271, 274 to 306, and 307 to 338; these read QQAECPGGCRNGGFCNERRICECPDGFHGPHCE, KALCTPRCMNGGLCVTPGFCICPPGFYGVNCD, KANCSTTCFNGGTCFYPGKCICPPGLEGE, EISKCPQPCRNGGKCIGKSKCKCSKGYQGDLCS, and KPVCEPGCGAHGTCHEPNKCQCQEGWHGRHCN. N-linked (GlcNAc...) asparagine glycosylation occurs at asparagine 245. Intrachain disulfides connect cysteine 246–cysteine 256, cysteine 250–cysteine 262, cysteine 278–cysteine 288, cysteine 282–cysteine 294, cysteine 296–cysteine 305, cysteine 310–cysteine 320, cysteine 314–cysteine 326, and cysteine 328–cysteine 337. A disordered region spans residues 354 to 379; sequence AQLRQHTPSLKKAEERRDPPESNYIW. Over residues 364–373 the composition is skewed to basic and acidic residues; that stretch reads KKAEERRDPP.

In terms of assembly, interacts with MYOC.

It is found in the secreted. In terms of biological role, binds to WNT proteins and inhibits their activities. May be involved in mesoderm segmentation. This Homo sapiens (Human) protein is Wnt inhibitory factor 1 (WIF1).